The chain runs to 522 residues: Tubulin-specific chaperone E (522 aa).

Residues 27-71 (GNVPPTPGLWLGVEWDNHLRGKHNGTHEGTKYFTCSHPTGGSFIR) enclose the CAP-Gly domain. LRR repeat units follow at residues 149–170 (NIMTADLSKNLFSSWESLAHIS), 175–196 (NLTSLDLSENKLNPSSNPSSLA), 201–222 (NLKVLSLNRTGMKWNEILQCAS), 226–248 (ALEELHLVSNDISLLEQPVNNLQ), 249–270 (NLTILDISNNKIVDGNQLHTIA), 274–295 (RLKQVIVSNNIISSISFPDVDF), and 303–324 (SLTSLAVNGNNISEWCVINELH). Positions 337–379 (NPLMDLDKNPETVRQLIIAKIENLKFLNKTEIFPTERRGAELD) constitute an LRRCT domain.

This sequence belongs to the TBCE family. In terms of assembly, supercomplex made of cofactors A to E. Cofactors A and D function by capturing and stabilizing tubulin in a quasi-native conformation. Cofactor E binds to the cofactor D-tubulin complex; interaction with cofactor C then causes the release of tubulin polypeptides that are committed to the native state.

The protein resides in the cytoplasm. Its subcellular location is the cytoskeleton. In terms of biological role, tubulin-folding protein; involved in the second step of the tubulin folding pathway. The protein is Tubulin-specific chaperone E (tbce) of Xenopus laevis (African clawed frog).